Reading from the N-terminus, the 1403-residue chain is DNA-directed RNA polymerase subunit beta' (1403 aa).

Cysteine 71, cysteine 73, cysteine 86, and cysteine 89 together coordinate Zn(2+). Mg(2+)-binding residues include aspartate 462, aspartate 464, and aspartate 466. The Zn(2+) site is built by cysteine 811, cysteine 885, cysteine 892, and cysteine 895.

It belongs to the RNA polymerase beta' chain family. In terms of assembly, the RNAP catalytic core consists of 2 alpha, 1 beta, 1 beta' and 1 omega subunit. When a sigma factor is associated with the core the holoenzyme is formed, which can initiate transcription. Requires Mg(2+) as cofactor. The cofactor is Zn(2+).

The catalysed reaction is RNA(n) + a ribonucleoside 5'-triphosphate = RNA(n+1) + diphosphate. DNA-dependent RNA polymerase catalyzes the transcription of DNA into RNA using the four ribonucleoside triphosphates as substrates. The sequence is that of DNA-directed RNA polymerase subunit beta' from Bartonella bacilliformis (strain ATCC 35685 / KC583 / Herrer 020/F12,63).